We begin with the raw amino-acid sequence, 339 residues long: DNA-directed RNA polymerase subunit alpha (339 aa).

The tract at residues 1–233 (MVREEVAGST…DLFLPFLHAE (233 aa)) is alpha N-terminal domain (alpha-NTD). Positions 264–339 (KKGIPLNCIF…IDLLKNKLSF (76 aa)) are alpha C-terminal domain (alpha-CTD).

It belongs to the RNA polymerase alpha chain family. As to quaternary structure, in plastids the minimal PEP RNA polymerase catalytic core is composed of four subunits: alpha, beta, beta', and beta''. When a (nuclear-encoded) sigma factor is associated with the core the holoenzyme is formed, which can initiate transcription.

It is found in the plastid. It localises to the chloroplast. It carries out the reaction RNA(n) + a ribonucleoside 5'-triphosphate = RNA(n+1) + diphosphate. Its function is as follows. DNA-dependent RNA polymerase catalyzes the transcription of DNA into RNA using the four ribonucleoside triphosphates as substrates. The sequence is that of DNA-directed RNA polymerase subunit alpha from Thinopyrum elongatum (Tall wheatgrass).